The following is a 181-amino-acid chain: Inner membrane-spanning protein YciB (181 aa).

Transmembrane regions (helical) follow at residues 10–30, 50–70, 72–92, 118–138, and 148–168; these read LIIF…GALI, MHLI…ILHD, SFIK…LGVS, VTWY…YVAF, and FKVF…VLYL.

The protein belongs to the YciB family.

The protein resides in the cell inner membrane. Functionally, plays a role in cell envelope biogenesis, maintenance of cell envelope integrity and membrane homeostasis. This chain is Inner membrane-spanning protein YciB, found in Shewanella halifaxensis (strain HAW-EB4).